The chain runs to 148 residues: Isotocin-neurophysin IT 2 (148 aa).

An N-terminal signal peptide occupies residues 1–20 (MSGSMSSVFSLLYLLSVCSA). A disulfide bridge links C21 with C26. G29 carries the glycine amide modification. Disulfide bonds link C42/C86, C45/C59, C53/C76, C60/C66, C93/C105, C99/C117, and C106/C111.

The protein belongs to the vasopressin/oxytocin family.

Functionally, isotocin causes contraction of smooth muscles. This is Isotocin-neurophysin IT 2 from Catostomus commersonii (White sucker).